A 469-amino-acid chain; its full sequence is Arginine biosynthesis bifunctional protein ArgJ, mitochondrial (469 aa).

Residues threonine 199, lysine 228, threonine 239, glutamate 325, asparagine 464, and threonine 469 each contribute to the substrate site. Residue threonine 239 is the Nucleophile of the active site.

It belongs to the ArgJ family. Heterodimer of an alpha and a beta chain. In terms of processing, the alpha and beta chains are autoproteolytically processed from a single precursor protein within the mitochondrion.

The protein resides in the mitochondrion matrix. It carries out the reaction N(2)-acetyl-L-ornithine + L-glutamate = N-acetyl-L-glutamate + L-ornithine. The catalysed reaction is L-glutamate + acetyl-CoA = N-acetyl-L-glutamate + CoA + H(+). It participates in amino-acid biosynthesis; L-arginine biosynthesis; L-ornithine and N-acetyl-L-glutamate from L-glutamate and N(2)-acetyl-L-ornithine (cyclic): step 1/1. It functions in the pathway amino-acid biosynthesis; L-arginine biosynthesis; N(2)-acetyl-L-ornithine from L-glutamate: step 1/4. Catalyzes two activities which are involved in the cyclic version of arginine biosynthesis: the synthesis of acetylglutamate from glutamate and acetyl-CoA, and of ornithine by transacetylation between acetylornithine and glutamate. The polypeptide is Arginine biosynthesis bifunctional protein ArgJ, mitochondrial (Sordaria macrospora (strain ATCC MYA-333 / DSM 997 / K(L3346) / K-hell)).